A 266-amino-acid polypeptide reads, in one-letter code: Ribosomal RNA small subunit methyltransferase A (266 aa).

Positions 11, 13, 37, 57, 85, and 104 each coordinate S-adenosyl-L-methionine.

It belongs to the class I-like SAM-binding methyltransferase superfamily. rRNA adenine N(6)-methyltransferase family. RsmA subfamily.

It is found in the cytoplasm. It carries out the reaction adenosine(1518)/adenosine(1519) in 16S rRNA + 4 S-adenosyl-L-methionine = N(6)-dimethyladenosine(1518)/N(6)-dimethyladenosine(1519) in 16S rRNA + 4 S-adenosyl-L-homocysteine + 4 H(+). Specifically dimethylates two adjacent adenosines (A1518 and A1519) in the loop of a conserved hairpin near the 3'-end of 16S rRNA in the 30S particle. May play a critical role in biogenesis of 30S subunits. This Campylobacter jejuni (strain RM1221) protein is Ribosomal RNA small subunit methyltransferase A.